Here is a 143-residue protein sequence, read N- to C-terminus: Large ribosomal subunit protein uL11 (143 aa).

This sequence belongs to the universal ribosomal protein uL11 family. In terms of assembly, part of the ribosomal stalk of the 50S ribosomal subunit. Interacts with L10 and the large rRNA to form the base of the stalk. L10 forms an elongated spine to which L12 dimers bind in a sequential fashion forming a multimeric L10(L12)X complex. Post-translationally, one or more lysine residues are methylated.

Forms part of the ribosomal stalk which helps the ribosome interact with GTP-bound translation factors. The protein is Large ribosomal subunit protein uL11 of Rhizobium rhizogenes (strain K84 / ATCC BAA-868) (Agrobacterium radiobacter).